We begin with the raw amino-acid sequence, 200 residues long: MIVGVLALQGGVEEHLTALEALGATTRKVRVPKDLDGLEGIVIPGGESTVLDKLARTFDVAEPLANLIRDGLPVFATCAGLIYLAKHLDNPARGQQTLELLDVVVRRNAFGTQRESFDTTVDVSFDGATFPGVQASFIRAPIVTAFGPTVEAIAALNGGEVVGVRQGNIIALSFHPEETGDYRIHQAWLNLIGKRTELAI.

Position 46-48 (46-48 (GES)) interacts with L-glutamine. The active-site Nucleophile is the C78. Residues R107 and 138 to 139 (IR) each bind L-glutamine. Active-site charge relay system residues include H175 and E177.

Belongs to the glutaminase PdxT/SNO family. In the presence of PdxS, forms a dodecamer of heterodimers. Only shows activity in the heterodimer.

The enzyme catalyses aldehydo-D-ribose 5-phosphate + D-glyceraldehyde 3-phosphate + L-glutamine = pyridoxal 5'-phosphate + L-glutamate + phosphate + 3 H2O + H(+). It catalyses the reaction L-glutamine + H2O = L-glutamate + NH4(+). It functions in the pathway cofactor biosynthesis; pyridoxal 5'-phosphate biosynthesis. Catalyzes the hydrolysis of glutamine to glutamate and ammonia as part of the biosynthesis of pyridoxal 5'-phosphate. The resulting ammonia molecule is channeled to the active site of PdxS. The chain is Pyridoxal 5'-phosphate synthase subunit PdxT from Corynebacterium glutamicum (strain R).